A 132-amino-acid polypeptide reads, in one-letter code: ATP synthase epsilon chain (132 aa).

The protein belongs to the ATPase epsilon chain family. In terms of assembly, F-type ATPases have 2 components, CF(1) - the catalytic core - and CF(0) - the membrane proton channel. CF(1) has five subunits: alpha(3), beta(3), gamma(1), delta(1), epsilon(1). CF(0) has three main subunits: a, b and c.

It localises to the cell membrane. Produces ATP from ADP in the presence of a proton gradient across the membrane. This Bacillus caldotenax protein is ATP synthase epsilon chain (atpC).